The following is a 357-amino-acid chain: DNA polymerase IV (357 aa).

A UmuC domain is found at 4-185 (IIHVDMDCYF…LSLRQIPGVG (182 aa)). Mg(2+) contacts are provided by aspartate 8 and aspartate 103. Glutamate 104 is a catalytic residue.

It belongs to the DNA polymerase type-Y family. As to quaternary structure, monomer. Requires Mg(2+) as cofactor.

It is found in the cytoplasm. The catalysed reaction is DNA(n) + a 2'-deoxyribonucleoside 5'-triphosphate = DNA(n+1) + diphosphate. In terms of biological role, poorly processive, error-prone DNA polymerase involved in untargeted mutagenesis. Copies undamaged DNA at stalled replication forks, which arise in vivo from mismatched or misaligned primer ends. These misaligned primers can be extended by PolIV. Exhibits no 3'-5' exonuclease (proofreading) activity. May be involved in translesional synthesis, in conjunction with the beta clamp from PolIII. The chain is DNA polymerase IV from Shewanella oneidensis (strain ATCC 700550 / JCM 31522 / CIP 106686 / LMG 19005 / NCIMB 14063 / MR-1).